We begin with the raw amino-acid sequence, 359 residues long: tRNA-specific 2-thiouridylase MnmA (359 aa).

ATP contacts are provided by residues 6 to 13 and L32; that span reads AMSGGVDS. The active-site Nucleophile is the C97. The cysteines at positions 97 and 195 are disulfide-linked. G121 contacts ATP. The tract at residues 144–146 is interaction with tRNA; that stretch reads KDQ. C195 (cysteine persulfide intermediate) is an active-site residue.

It belongs to the MnmA/TRMU family.

It is found in the cytoplasm. The catalysed reaction is S-sulfanyl-L-cysteinyl-[protein] + uridine(34) in tRNA + AH2 + ATP = 2-thiouridine(34) in tRNA + L-cysteinyl-[protein] + A + AMP + diphosphate + H(+). Catalyzes the 2-thiolation of uridine at the wobble position (U34) of tRNA, leading to the formation of s(2)U34. The sequence is that of tRNA-specific 2-thiouridylase MnmA from Tropheryma whipplei (strain TW08/27) (Whipple's bacillus).